The chain runs to 550 residues: Efflux pump DEP3 (550 aa).

Positions 1 to 33 (MSEQSTLAGPYTEKPGVESQNPTGDGKASFDET) are disordered. 11 helical membrane-spanning segments follow: residues 44-64 (AIAYAAMLSTTFLFALDNTIV), 78-98 (LELISWIGTGFALGTMFILLW), 109-129 (WVYIFNILLFEVGSAVCGAAP), 139-159 (VIAGIGGSGMYSGTLTYVSVL), 172-192 (STVVWGVGSVVGPVVGGAFAA), 199-219 (WGFYINLPIGAVFAPAYMILF), 242-262 (AVIFLAGSACLTVALTFGGVV), 268-288 (GTIIALWTVTGVLLVAFIVLL), 319-339 (FLASGIILAMTYYVPLYFQFI), 351-371 (LLPLIMFMVAFSMVNGFLMPK), and 373-393 (GLIPIWYIVGSALTLIGSALM). Asn-399 is a glycosylation site (N-linked (GlcNAc...) asparagine). 3 helical membrane passes run 410–430 (ILVGAGAGCYIVAGFAIVQSL), 439–459 (AVGAMTISQDLGMVLFLAICG), and 515–535 (SIWAFFMAAAALSFVCSWPLF).

It belongs to the major facilitator superfamily. TCR/Tet family.

It localises to the cell membrane. Its function is as follows. Efflux pump; part of the gene cluster that mediates the biosynthesis of depudecin, a highly oxidized eleven-carbon linear polyketide that acts as a histone deacetylase (HDAC) inhibitor and makes a small contribution to pathogenesis. Is presumed either to be responsible for exporting depudecin, to provide self-protection, or both. The polypeptide is Efflux pump DEP3 (Fusarium langsethiae).